The sequence spans 113 residues: U11-theraphotoxin-Hhn1a (113 aa).

The first 21 residues, 1–21 (MNTVRVTFLLVFVLPVSLGQA), serve as a signal peptide directing secretion. Residues 22 to 74 (DKDENRMEMQEKTEQGKSYLDFAENLLLQKLEELEAKLLEEDSEESRNSRQKR) constitute a propeptide that is removed on maturation. Residues 60–69 (LEEDSEESRN) are compositionally biased toward basic and acidic residues. Residues 60-83 (LEEDSEESRNSRQKRCIGEGVPCD) are disordered. Intrachain disulfides connect C75-C90, C82-C95, and C89-C110.

This sequence belongs to the neurotoxin 14 (magi-1) family. 01 (HNTX-16) subfamily. In terms of tissue distribution, expressed by the venom gland.

The protein resides in the secreted. Probable ion channel inhibitor. The chain is U11-theraphotoxin-Hhn1a from Cyriopagopus hainanus (Chinese bird spider).